The sequence spans 844 residues: Patched-related protein 9 (844 aa).

The region spanning 264-421 (LIPWMPWTSL…VTFFNAVMSL (158 aa)) is the SSD domain.

The protein belongs to the patched family.

This chain is Patched-related protein 9 (ptr-9), found in Caenorhabditis elegans.